We begin with the raw amino-acid sequence, 175 residues long: NADH-ubiquinone oxidoreductase chain 6 (175 aa).

The next 5 membrane-spanning stretches (helical) occupy residues 1–21, 25–45, 47–67, 88–108, and 149–169; these read MMTYIVFILSVIFVVSFVGFS, SPIYGGLVLIVSGGVGCGIIM, FGGSFLGLMVFLIYLGGMLVV, TVMGVFLLGLLMEVMLVLYVL, and YGAWVVIVTGWSLLVGVLVIL.

This sequence belongs to the complex I subunit 6 family. Core subunit of respiratory chain NADH dehydrogenase (Complex I) which is composed of 45 different subunits.

It is found in the mitochondrion inner membrane. The enzyme catalyses a ubiquinone + NADH + 5 H(+)(in) = a ubiquinol + NAD(+) + 4 H(+)(out). Its function is as follows. Core subunit of the mitochondrial membrane respiratory chain NADH dehydrogenase (Complex I) which catalyzes electron transfer from NADH through the respiratory chain, using ubiquinone as an electron acceptor. Essential for the catalytic activity and assembly of complex I. This is NADH-ubiquinone oxidoreductase chain 6 (MT-ND6) from Equus caballus (Horse).